Here is a 530-residue protein sequence, read N- to C-terminus: Ubiquitin carboxyl-terminal hydrolase 17 (530 aa).

The USP domain occupies 80 to 375; that stretch reads AGLQNMGNTC…QAYVLFYIQK (296 aa). Catalysis depends on cysteine 89, which acts as the Nucleophile. The Proton acceptor role is filled by histidine 334. 2 stretches are compositionally biased toward basic and acidic residues: residues 382–392 and 398–413; these read SESVSRGREPR and DTDR…RDHP. 2 disordered regions span residues 382 to 416 and 490 to 530; these read SESV…PCLQ and SSTT…LVCQ. The tract at residues 399–530 is mediates interaction with SUDS3; the sequence is TDRRATQGEL…HSKRALLVCQ (132 aa). Residues 498–510 show a composition bias toward polar residues; the sequence is ESVNTGTLASLQG. Residues 511–524 are compositionally biased toward basic residues; sequence RTRRSKGKNKHSKR.

The protein belongs to the peptidase C19 family. USP17 subfamily. In terms of assembly, interacts with SUDS3; the interaction is direct. Broadly expressed.

It is found in the nucleus. It localises to the endoplasmic reticulum. It catalyses the reaction Thiol-dependent hydrolysis of ester, thioester, amide, peptide and isopeptide bonds formed by the C-terminal Gly of ubiquitin (a 76-residue protein attached to proteins as an intracellular targeting signal).. Functionally, deubiquitinating enzyme that removes conjugated ubiquitin from specific proteins to regulate different cellular processes. Regulates cell proliferation by deubiquitinating and inhibiting RCE1 thereby controlling the small GTPases NRAS and HRAS localization and activation. In parallel, mediates deubiquitination of CDC25A, preventing CDC25A degradation by the proteasome during the G1/S and G2/M phases promoting cell-cycle progression. Also regulates cell proliferation and apoptosis through deubiquitination of SUDS3 a regulator of histone deacetylation. Through activation of the Rho family GTPases RAC1A, CDC42 and RHOA, regulates cell migration. Through the cleavage of 'Lys-48'- and 'Lys-63'-linked polyubiquitin chains of the cytoplasmic innate immune receptors RIGI and IFIH1 stimulates the cellular response to viral infection. In Homo sapiens (Human), this protein is Ubiquitin carboxyl-terminal hydrolase 17 (USP17L2).